Reading from the N-terminus, the 465-residue chain is Protein hedgehog (465 aa).

Cysteine 79 carries the N-palmitoyl cysteine lipid modification. Ca(2+) is bound by residues glutamate 143, glutamate 144, aspartate 149, threonine 179, glutamate 180, aspartate 183, and aspartate 185. Glycine 251 carries the Cholesterol glycine ester lipid modification.

The protein belongs to the hedgehog family. As to quaternary structure, interacts with shf. Post-translationally, the C-terminal part of the hedgehog protein precursor displays an autoproteolysis activity that results in the cleavage of the full-length protein into two parts (N-product and C-product). In addition, the C-terminal part displays a cholesterol transferase activity that results by the covalent attachment of a cholesterol moiety to the C-terminal of the newly generated N-product. The N-product is the active species in both local and long-range signaling, whereas the C-product has no signaling activity. Cholesterylation is required for N-product targeting to lipid rafts and multimerization. In terms of processing, N-palmitoylation by Rasp of the hedgehog N-product, within the secretory pathway, is required for the embryonic and larval patterning activities of the hedgehog signal.

Its subcellular location is the nucleus. It localises to the cytoplasm. It is found in the cell membrane. It catalyses the reaction glycyl-L-cysteinyl-[protein] + cholesterol + H(+) = [protein]-C-terminal glycyl cholesterol ester + N-terminal L-cysteinyl-[protein]. In terms of biological role, the C-terminal part of the hedgehog protein precursor displays an autoproteolysis activity that results in the cleavage of the full-length protein into two parts (N-product and C-product). In addition, the C-terminal part displays a cholesterol transferase activity that results by the covalent attachment of a cholesterol moiety to the C-terminal of the newly generated N-product. Once cleaved, the C-product has no signaling activity and diffuses from the cell. The dually lipidated hedgehog protein N-product is a morphogen which is essential for a variety of patterning events during development. Establishes the anterior-posterior axis of the embryonic segments and patterns the larval imaginal disks. Binds to the patched (ptc) receptor, which functions in association with smoothened (smo), to activate the transcription of target genes wingless (wg), decapentaplegic (dpp) and ptc. In the absence of hh, ptc represses the constitutive signaling activity of smo through fused (fu). Essential component of a signaling pathway which regulates the Duox-dependent gut immune response to bacterial uracil; required to activate Cad99C-dependent endosome formation, norpA-dependent Ca2+ mobilization and p38 MAPK, which are essential steps in the Duox-dependent production of reactive oxygen species (ROS) in response to intestinal bacterial infection. During photoreceptor differentiation, it up-regulates transcription of Ubr3, which in turn promotes the hh-signaling pathway by mediating the ubiquitination and degradation of cos. This Drosophila sechellia (Fruit fly) protein is Protein hedgehog.